The chain runs to 692 residues: Elongation factor G (692 aa).

In terms of domain architecture, tr-type G spans 8–283; that stretch reads EKVRNIGIAA…AVVDYLPAPT (276 aa). Residues 17–24, 81–85, and 135–138 contribute to the GTP site; these read AHIDAGKT, DTPGH, and NKMD.

The protein belongs to the TRAFAC class translation factor GTPase superfamily. Classic translation factor GTPase family. EF-G/EF-2 subfamily.

It is found in the cytoplasm. Its function is as follows. Catalyzes the GTP-dependent ribosomal translocation step during translation elongation. During this step, the ribosome changes from the pre-translocational (PRE) to the post-translocational (POST) state as the newly formed A-site-bound peptidyl-tRNA and P-site-bound deacylated tRNA move to the P and E sites, respectively. Catalyzes the coordinated movement of the two tRNA molecules, the mRNA and conformational changes in the ribosome. The chain is Elongation factor G from Nitratiruptor sp. (strain SB155-2).